A 321-amino-acid polypeptide reads, in one-letter code: Ubiquitin-conjugating enzyme E2 U (321 aa).

The UBC core domain maps to 4–153 (RAYLLLHRDF…LRLFNRPLQM (150 aa)). Cys89 serves as the catalytic Glycyl thioester intermediate. The interval 285-321 (WKSDTSLYENDTDEPREEEVEDLISWTNTLNTNTSED) is disordered. Over residues 294–306 (NDTDEPREEEVED) the composition is skewed to acidic residues. Residues 309–321 (SWTNTLNTNTSED) show a composition bias toward polar residues.

This sequence belongs to the ubiquitin-conjugating enzyme family. Autoubiquitinated in vitro in the presence of UBR5.

It catalyses the reaction S-ubiquitinyl-[E1 ubiquitin-activating enzyme]-L-cysteine + [E2 ubiquitin-conjugating enzyme]-L-cysteine = [E1 ubiquitin-activating enzyme]-L-cysteine + S-ubiquitinyl-[E2 ubiquitin-conjugating enzyme]-L-cysteine.. It participates in protein modification; protein ubiquitination. Catalyzes the covalent attachment of ubiquitin to other proteins. This Homo sapiens (Human) protein is Ubiquitin-conjugating enzyme E2 U (UBE2U).